We begin with the raw amino-acid sequence, 559 residues long: Tissue-type plasminogen activator (559 aa).

An N-terminal signal peptide occupies residues 1–17 (MKGELLCVLLLCGVAFT). Positions 18–29 (LPDQGIHRRFRR) are excised as a propeptide. Positions 30-32 (GAR) are cleaved as a propeptide — removed by plasmin. In terms of domain architecture, Fibronectin type-I spans 36-78 (ATCRDEQTQTTYQQHQSWLRPMLRGNRVEYCRCNSGLAQCHSV). 17 cysteine pairs are disulfide-bonded: Cys-38/Cys-68, Cys-66/Cys-75, Cys-83/Cys-94, Cys-88/Cys-105, Cys-107/Cys-116, Cys-124/Cys-205, Cys-145/Cys-187, Cys-176/Cys-200, Cys-213/Cys-294, Cys-234/Cys-276, Cys-265/Cys-289, Cys-297/Cys-428, Cys-340/Cys-356, Cys-348/Cys-417, Cys-442/Cys-516, Cys-474/Cys-490, and Cys-506/Cys-534. Residues 39-49 (RDEQTQTTYQQ) form an important for binding to annexin A2 region. The 39-residue stretch at 79-117 (PVRSCSEPRCFNGGTCQQALYFSDFVCQCPDGFVGKRCD) folds into the EGF-like domain. Kringle domains are found at residues 124–205 (CFEG…TPAC) and 213–294 (CYVG…MSPC). Asn-149 carries N-linked (GlcNAc...) asparagine glycosylation. The Peptidase S1 domain maps to 309–558 (IKGGLFTDIT…YLNWIQDNMK (250 aa)). Residues His-355 and Asp-404 each act as charge relay system in the active site. Asn-481 carries an N-linked (GlcNAc...) asparagine glycan. The Charge relay system role is filled by Ser-510.

This sequence belongs to the peptidase S1 family. As to quaternary structure, heterodimer of chain A and chain B held by a disulfide bond. Binds to fibrin with high affinity. This interaction leads to an increase in the catalytic efficiency of the enzyme due to an increase in affinity for plasminogen. Similarly, binding to heparin increases the activation of plasminogen. Binds to annexin A2, cytokeratin-8, fibronectin and laminin. Binds to mannose receptor and the low-density lipoprotein receptor-related protein (LRP1); these proteins are involved in TPA clearance. Binds LRP1B; binding is followed by internalization and degradation. Forms heterodimer with SERPINA5. Interacts with SERPINE1. In complex with SERPINE1, interacts with SORL1. Post-translationally, the single chain, almost fully active enzyme, can be further processed into a two-chain fully active form by a cleavage after Arg-308 catalyzed by plasmin, tissue kallikrein or factor Xa.

Its subcellular location is the secreted. It localises to the extracellular space. It carries out the reaction Specific cleavage of Arg-|-Val bond in plasminogen to form plasmin.. With respect to regulation, inhibited by SERPINA5. Inhibited by SERPINE1. Functionally, converts the abundant, but inactive, zymogen plasminogen to plasmin by hydrolyzing a single Arg-Val bond in plasminogen. By controlling plasmin-mediated proteolysis, it plays an important role in tissue remodeling and degradation, in cell migration and many other physiopathological events. During oocyte activation, plays a role in cortical granule reaction in the zona reaction, which contributes to the block to polyspermy. This is Tissue-type plasminogen activator (Plat) from Rattus norvegicus (Rat).